A 477-amino-acid chain; its full sequence is Protein kinase C and casein kinase substrate in neurons protein 2 (477 aa).

The F-BAR domain maps to 11 to 282 (VEVSSDSFWE…AIKSADAMED (272 aa)). Residues 25–274 (KRTVKRIDDG…SIYRELEYAI (250 aa)) adopt a coiled-coil conformation. Basic and acidic residues-rich tracts occupy residues 163 to 176 (CKEE…ETNS) and 186 to 216 (QLKK…KDLD). Disordered regions lie at residues 163–218 (CKEE…LDGT) and 314–412 (RREK…PFDE). A compositionally biased stretch (low complexity) spans 328–341 (GISQSGEQSSIQNQ). Over residues 342 to 357 (HSSHLSVQSAQSTNNP) the composition is skewed to polar residues. The short motif at 356 to 358 (NPF) is the NPF1 element. A compositionally biased stretch (basic and acidic residues) spans 370–388 (TENKKIENVGSYEKTHPAE). The segment covering 395–407 (NNPFNPSDTNGDN) has biased composition (polar residues). The NPF2 signature appears at 396–398 (NPF). Positions 408–410 (NPF) match the NPF3 motif. Residues 417–477 (TLEVRVRALY…YPANYVESVQ (61 aa)) form the SH3 domain.

This sequence belongs to the PACSIN family. In terms of assembly, interacts with adam13 through the SH3 domains. Phosphorylated. Ubiquitously expressed with higher expression in the ectoderm, the neuroectoderm, and dorsal mesoderm layers.

Its subcellular location is the cytoplasm. The protein resides in the cytoskeleton. It is found in the cytoplasmic vesicle membrane. It localises to the cell projection. The protein localises to the ruffle membrane. Its subcellular location is the early endosome. The protein resides in the recycling endosome membrane. It is found in the cell membrane. It localises to the membrane. The protein localises to the caveola. Its subcellular location is the cell junction. The protein resides in the adherens junction. Regulates the morphogenesis and endocytosis of caveolae. Lipid-binding protein that is able to promote the tubulation of the phosphatidic acid-containing membranes it preferentially binds. Plays a role in intracellular vesicle-mediated transport. Involved in the endocytosis of cell-surface receptors like the EGF receptor, contributing to its internalization in the absence of EGF stimulus. This Xenopus laevis (African clawed frog) protein is Protein kinase C and casein kinase substrate in neurons protein 2 (pacsin2).